The following is a 345-amino-acid chain: Annexin A9 (345 aa).

Annexin repeat units lie at residues 41–112 (FSVD…ALLQ), 113–184 (PAAQ…ALSK), 197–266 (NLEE…SLAS), and 270–341 (NTAL…ALCR).

It belongs to the annexin family. In terms of assembly, homodimer.

May act as a low affinity receptor for acetylcholine. This is Annexin A9 (Anxa9) from Mus musculus (Mouse).